The sequence spans 758 residues: Inhibitor of nuclear factor kappa-B kinase subunit alpha (758 aa).

A Protein kinase domain is found at 15–301 (WVMKERLGTG…LNTDSKQPQC (287 aa)). ATP is bound by residues 21–29 (LGTGGFGHV) and lysine 44. The active-site Proton acceptor is aspartate 145. The segment at 456 to 477 (LLRFNTNLTRYKNMMFSFSQQL) is leucine-zipper. The tract at residues 741–746 (QDWSWT) is NEMO-binding.

This sequence belongs to the protein kinase superfamily. Ser/Thr protein kinase family. I-kappa-B kinase subfamily. In terms of assembly, directly interacts with ikbkg/nemo.

The protein localises to the cytoplasm. It localises to the nucleus. It catalyses the reaction L-seryl-[I-kappa-B protein] + ATP = O-phospho-L-seryl-[I-kappa-B protein] + ADP + H(+). Activated when phosphorylated and inactivated when dephosphorylated. In terms of biological role, phosphorylates inhibitors of NF-kappa-B thus leading to the dissociation of the inhibitor/NF-kappa-B complex and ultimately the degradation of the inhibitor. Phosphorylates 'Ser-10' of histone H3 at NF-kappa-B-regulated promoters during inflammatory responses triggered by cytokines. This Danio rerio (Zebrafish) protein is Inhibitor of nuclear factor kappa-B kinase subunit alpha (chuk).